Consider the following 122-residue polypeptide: Large ribosomal subunit protein bL12 (122 aa).

It belongs to the bacterial ribosomal protein bL12 family. As to quaternary structure, homodimer. Part of the ribosomal stalk of the 50S ribosomal subunit. Forms a multimeric L10(L12)X complex, where L10 forms an elongated spine to which 2 to 4 L12 dimers bind in a sequential fashion. Binds GTP-bound translation factors.

Functionally, forms part of the ribosomal stalk which helps the ribosome interact with GTP-bound translation factors. Is thus essential for accurate translation. This Glaesserella parasuis serovar 5 (strain SH0165) (Haemophilus parasuis) protein is Large ribosomal subunit protein bL12.